A 90-amino-acid polypeptide reads, in one-letter code: uncharacterized protein (90 aa).

This is an uncharacterized protein from Haemophilus influenzae (strain ATCC 51907 / DSM 11121 / KW20 / Rd).